The sequence spans 1420 residues: DNA-directed RNA polymerase subunit beta'' (1420 aa).

Zn(2+) contacts are provided by Cys220, Cys295, Cys302, and Cys305.

The protein belongs to the RNA polymerase beta' chain family. RpoC2 subfamily. As to quaternary structure, in plastids the minimal PEP RNA polymerase catalytic core is composed of four subunits: alpha, beta, beta', and beta''. When a (nuclear-encoded) sigma factor is associated with the core the holoenzyme is formed, which can initiate transcription. Requires Zn(2+) as cofactor.

Its subcellular location is the plastid. The protein resides in the chloroplast. It catalyses the reaction RNA(n) + a ribonucleoside 5'-triphosphate = RNA(n+1) + diphosphate. Functionally, DNA-dependent RNA polymerase catalyzes the transcription of DNA into RNA using the four ribonucleoside triphosphates as substrates. This chain is DNA-directed RNA polymerase subunit beta'', found in Adiantum capillus-veneris (Maidenhair fern).